Consider the following 239-residue polypeptide: Norbelladine 4'-O-methyltransferase (239 aa).

S-adenosyl-L-methionine is bound by residues Val-55, Glu-77, 79-80, Ser-85, Asp-103, and Ala-132; that span reads GV. Position 155 (Asp-155) interacts with a divalent metal cation. Asp-157 provides a ligand contact to S-adenosyl-L-methionine. Asp-181 and Asn-182 together coordinate a divalent metal cation.

This sequence belongs to the class I-like SAM-binding methyltransferase superfamily. Cation-dependent O-methyltransferase family. Mg(2+) serves as cofactor. Highly expressed in bulbs. Detected in leaves and inflorescences.

The catalysed reaction is norbelladine + S-adenosyl-L-methionine = 4'-O-methylnorbelladine + S-adenosyl-L-homocysteine + H(+). The protein operates within alkaloid biosynthesis. Functionally, 4'-O-methyltransferase converting norbelladine to 4'-O-methylnorbelladine. 4'-O-methylnorbelladine is a precursor to all Amaryllidaceae alkaloids such as galanthamine, lycorine and haemanthamine, and including haemanthamine- and crinamine-type alkaloids, promising anticancer agents. Can use norbelladine, N-methylnorbelladine and dopamine as substrate, but not caffeic acid, vanillin, 3,4-dihydroxybenzaldehyde and tyramine. In Narcissus aff. pseudonarcissus MK-2014 (Daffodil), this protein is Norbelladine 4'-O-methyltransferase.